The primary structure comprises 1264 residues: ATP-dependent helicase/nuclease subunit A (1264 aa).

The UvrD-like helicase ATP-binding domain maps to E12–R482. Residue A33 to T40 participates in ATP binding. The 289-residue stretch at S520–G808 folds into the UvrD-like helicase C-terminal domain.

The protein belongs to the helicase family. AddA subfamily. In terms of assembly, heterodimer of AddA and AddB/RexB. Requires Mg(2+) as cofactor.

The enzyme catalyses Couples ATP hydrolysis with the unwinding of duplex DNA by translocating in the 3'-5' direction.. It carries out the reaction ATP + H2O = ADP + phosphate + H(+). Functionally, the heterodimer acts as both an ATP-dependent DNA helicase and an ATP-dependent, dual-direction single-stranded exonuclease. Recognizes the chi site generating a DNA molecule suitable for the initiation of homologous recombination. The AddA nuclease domain is required for chi fragment generation; this subunit has the helicase and 3' -&gt; 5' nuclease activities. This Enterococcus faecalis (strain ATCC 700802 / V583) protein is ATP-dependent helicase/nuclease subunit A.